A 343-amino-acid chain; its full sequence is Probable siderophore transport system permease protein YfhA (343 aa).

9 consecutive transmembrane segments (helical) span residues 15–35 (WIVF…SAGL), 69–89 (ILTA…LQGL), 97–117 (PDII…MMFF), 130–150 (WLPA…YLLA), 160–180 (LVLI…LLMI), 204–224 (QHVK…FVAL), 249–269 (FFLL…AGTI), 289–309 (GALL…ADIV), and 317–337 (VEVP…IYLL).

It belongs to the binding-protein-dependent transport system permease family. FecCD subfamily. As to quaternary structure, the complex is composed of one ATP-binding protein (YusV), two transmembrane proteins (YfiZ and YfhA) and a solute-binding protein (YfiY).

The protein resides in the cell membrane. In terms of biological role, part of the ABC transporter complex YfiYZ/YfhA/YusV involved in import of the iron-hydroxamate siderophores schizokinen, arthrobactin and corprogen. The sequence is that of Probable siderophore transport system permease protein YfhA (yfhA) from Bacillus subtilis (strain 168).